Consider the following 355-residue polypeptide: Phosphoserine aminotransferase (355 aa).

Residue Arg-41 participates in L-glutamate binding. Pyridoxal 5'-phosphate is bound by residues 75-76 (AS), Trp-99, Thr-147, Asp-166, and Gln-189. Lys-190 carries the N6-(pyridoxal phosphate)lysine modification. 231-232 (NT) provides a ligand contact to pyridoxal 5'-phosphate.

The protein belongs to the class-V pyridoxal-phosphate-dependent aminotransferase family. SerC subfamily. In terms of assembly, homodimer. It depends on pyridoxal 5'-phosphate as a cofactor.

It localises to the cytoplasm. It carries out the reaction O-phospho-L-serine + 2-oxoglutarate = 3-phosphooxypyruvate + L-glutamate. The catalysed reaction is 4-(phosphooxy)-L-threonine + 2-oxoglutarate = (R)-3-hydroxy-2-oxo-4-phosphooxybutanoate + L-glutamate. The protein operates within amino-acid biosynthesis; L-serine biosynthesis; L-serine from 3-phospho-D-glycerate: step 2/3. Its pathway is cofactor biosynthesis; pyridoxine 5'-phosphate biosynthesis; pyridoxine 5'-phosphate from D-erythrose 4-phosphate: step 3/5. Functionally, catalyzes the reversible conversion of 3-phosphohydroxypyruvate to phosphoserine and of 3-hydroxy-2-oxo-4-phosphonooxybutanoate to phosphohydroxythreonine. This Bacteroides fragilis (strain ATCC 25285 / DSM 2151 / CCUG 4856 / JCM 11019 / LMG 10263 / NCTC 9343 / Onslow / VPI 2553 / EN-2) protein is Phosphoserine aminotransferase.